A 177-amino-acid chain; its full sequence is ECF RNA polymerase sigma factor SigL (177 aa).

Residues 18–85 (LYDEHAAVLW…MIIDERRSAR (68 aa)) are sigma-70 factor domain-2. Residues 42–45 (DVVQ) carry the Interaction with polymerase core subunit RpoC motif. The sigma-70 factor domain-4 stretch occupies residues 119 to 167 (ALAQLSAEHRAVIQRSYYRGWSTAQIATDLGIAEGTVKSRLHYAVRALR). The segment at residues 141–160 (TAQIATDLGIAEGTVKSRLH) is a DNA-binding region (H-T-H motif).

This sequence belongs to the sigma-70 factor family. ECF subfamily. Interacts transiently with the RNA polymerase catalytic core formed by RpoA, RpoB, RpoC and RpoZ (2 alpha, 1 beta, 1 beta' and 1 omega subunit) to form the RNA polymerase holoenzyme that can initiate transcription. Interacts (via sigma-70 factor domain 4) with anti-sigma-L factor RslA.

Sigma factors are initiation factors that promote the attachment of RNA polymerase to specific initiation sites and are then released. Extracytoplasmic function (ECF) sigma factors are held in an inactive form by an anti-sigma factor until released by regulated intramembrane proteolysis. This is ECF RNA polymerase sigma factor SigL (sigL) from Mycobacterium tuberculosis (strain ATCC 35801 / TMC 107 / Erdman).